The chain runs to 765 residues: Probable dipeptidyl peptidase 4 (765 aa).

Positions 1 to 14 are cleaved as a signal peptide; sequence MKWSILLLVGCAAA. N-linked (GlcNAc...) asparagine glycans are attached at residues asparagine 35, asparagine 78, asparagine 101, asparagine 110, asparagine 169, asparagine 218, asparagine 465, and asparagine 490. The active-site Charge relay system is serine 613. N-linked (GlcNAc...) asparagine glycosylation occurs at asparagine 665. Residues aspartate 690 and histidine 725 each act as charge relay system in the active site.

The protein belongs to the peptidase S9B family.

Its subcellular location is the secreted. The enzyme catalyses Release of an N-terminal dipeptide, Xaa-Yaa-|-Zaa-, from a polypeptide, preferentially when Yaa is Pro, provided Zaa is neither Pro nor hydroxyproline.. Its function is as follows. Extracellular dipeptidyl-peptidase which removes N-terminal dipeptides sequentially from polypeptides having unsubstituted N-termini provided that the penultimate residue is proline. Contributes to pathogenicity. The chain is Probable dipeptidyl peptidase 4 (dpp4) from Aspergillus fumigatus (strain CBS 144.89 / FGSC A1163 / CEA10) (Neosartorya fumigata).